The following is a 166-amino-acid chain: Phosphopantetheine adenylyltransferase (166 aa).

Ser-9 contributes to the substrate binding site. ATP-binding positions include 9–10 and His-17; that span reads SF. Positions 41, 74, and 88 each coordinate substrate. ATP contacts are provided by residues 89-91, Glu-99, and 124-130; these read GLR and DSFISSS.

Belongs to the bacterial CoaD family. In terms of assembly, homohexamer. The cofactor is Mg(2+).

Its subcellular location is the cytoplasm. The enzyme catalyses (R)-4'-phosphopantetheine + ATP + H(+) = 3'-dephospho-CoA + diphosphate. The protein operates within cofactor biosynthesis; coenzyme A biosynthesis; CoA from (R)-pantothenate: step 4/5. In terms of biological role, reversibly transfers an adenylyl group from ATP to 4'-phosphopantetheine, yielding dephospho-CoA (dPCoA) and pyrophosphate. The protein is Phosphopantetheine adenylyltransferase of Lactobacillus johnsonii (strain CNCM I-12250 / La1 / NCC 533).